The following is a 658-amino-acid chain: MMPRLLFRAWPRCPSLVLGAPSRPLSAVSGPDDYLQHSIVPTMHYQDSLPRLPIPKLEDTMKRYLNAQKPLLDDSQFRRTEALCKNFETGVGKELHAHLLAQDKQNKHTSYISGPWFDMYLTARDSIVLNFNPFMAFNPDPKSEYNDQLTRATNLTVSAVRFLKTLQAGLLEPEVFHLNPSKSDTDAFKRLIRFVPPSLSWYGAYLVNAYPLDMSQYFRLFNSTRIPRPNRDELFTDTKARHLLVLRKGHFYVFDVLDQDGNIVNPLEIQAHLKYILSDSSPVPEFPVAYLTSENRDVWAELRQKLIFDGNEETLKKVDSAVFCLCLDDFPMKDLIHLSHTMLHGDGTNRWFDKSFNLIVAEDGTAAVHFEHSWGDGVAVLRFFNEVFRDSTQTPAITPQSQPAATNSSASVETLSFNLSGALKAGITAAKEKFDTTVKTLSIDSIQFQRGGKEFLKKKQLSPDAVAQLAFQMAFLRQYGQTVATYESCSTAAFKHGRTETIRPASIFTKRCSEAFVRDPSKHSVGELQHMMAECSKYHGQLTKEAAMGQGFDRHLYALRYLATARGLNLPELYLDPAYQQMNHNILSTSTLNSPAVSLGGFAPVVPDGFGIAYAVHDDWIGCNVSSYSGRNAREFLHCVQKCLEDIFDALEGKAIKT.

A mitochondrion-targeting transit peptide spans 1 to 25 (MMPRLLFRAWPRCPSLVLGAPSRPL). Residues 26–178 (SAVSGPDDYL…GLLEPEVFHL (153 aa)) are Mitochondrial matrix-facing. 2 positions are modified to N6-succinyllysine: Lys69 and Lys85. The segment at residues 179 to 208 (NPSKSDTDAFKRLIRFVPPSLSWYGAYLVN) is an intramembrane region (note=Mitochondrial inner membrane). The Mitochondrial matrix segment spans residues 209–658 (AYPLDMSQYF…DALEGKAIKT (450 aa)). Lys239 carries the N6-acetyllysine; alternate modification. Lys239 is modified (N6-succinyllysine; alternate). Lys305 is subject to N6-acetyllysine. Catalysis depends on His372, which acts as the Proton acceptor. N6-succinyllysine occurs at positions 424 and 439. 452-464 (GKEFLKKKQLSPD) is a CoA binding site. (R)-carnitine contacts are provided by Tyr486, Ser488, and Thr499. N6-acetyllysine; alternate is present on residues Lys510 and Lys544. Lys510 and Lys544 each carry N6-succinyllysine; alternate.

Belongs to the carnitine/choline acetyltransferase family.

It is found in the mitochondrion inner membrane. It carries out the reaction (R)-carnitine + hexadecanoyl-CoA = O-hexadecanoyl-(R)-carnitine + CoA. It catalyses the reaction octanoyl-CoA + (R)-carnitine = O-octanoyl-(R)-carnitine + CoA. The catalysed reaction is decanoyl-CoA + (R)-carnitine = O-decanoyl-(R)-carnitine + CoA. The enzyme catalyses dodecanoyl-CoA + (R)-carnitine = O-dodecanoyl-R-carnitine + CoA. It carries out the reaction tetradecanoyl-CoA + (R)-carnitine = O-tetradecanoyl-(R)-carnitine + CoA. It catalyses the reaction (R)-carnitine + octadecanoyl-CoA = O-octadecanoyl-(R)-carnitine + CoA. The catalysed reaction is eicosanoyl-CoA + (R)-carnitine = O-eicosanoyl-(R)-carnitine + CoA. The enzyme catalyses (9Z)-tetradecenoyl-CoA + (R)-carnitine = O-(9Z)-tetradecenoyl-(R)-carnitine + CoA. It carries out the reaction (5Z)-tetradecenoyl-CoA + (R)-carnitine = O-(5Z)-tetradecenoyl-(R)-carnitine + CoA. It catalyses the reaction (R)-carnitine + (9Z)-octadecenoyl-CoA = O-(9Z)-octadecenoyl-(R)-carnitine + CoA. The catalysed reaction is 4,8-dimethylnonanoyl-CoA + (R)-carnitine = O-4,8-dimethylnonanoyl-(R)-carnitine + CoA. Its pathway is lipid metabolism; fatty acid beta-oxidation. In terms of biological role, involved in the intramitochondrial synthesis of acylcarnitines from accumulated acyl-CoA metabolites. Reconverts acylcarnitines back into the respective acyl-CoA esters that can then undergo beta-oxidation, an essential step for the mitochondrial uptake of long-chain fatty acids and their subsequent beta-oxidation in the mitochondrion. Active with medium (C8-C12) and long-chain (C14-C18) acyl-CoA esters. This chain is Carnitine O-palmitoyltransferase 2, mitochondrial, found in Rattus norvegicus (Rat).